The sequence spans 195 residues: Dephospho-CoA kinase (195 aa).

A DPCK domain is found at 4–195 (IIGLTGGIAS…EQILDALQRL (192 aa)). 12–17 (ASGKST) contributes to the ATP binding site.

This sequence belongs to the CoaE family.

The protein resides in the cytoplasm. The enzyme catalyses 3'-dephospho-CoA + ATP = ADP + CoA + H(+). The protein operates within cofactor biosynthesis; coenzyme A biosynthesis; CoA from (R)-pantothenate: step 5/5. Its function is as follows. Catalyzes the phosphorylation of the 3'-hydroxyl group of dephosphocoenzyme A to form coenzyme A. The polypeptide is Dephospho-CoA kinase (Streptococcus agalactiae serotype Ia (strain ATCC 27591 / A909 / CDC SS700)).